Consider the following 448-residue polypeptide: Vitamin D3 receptor (448 aa).

A DNA-binding region (nuclear receptor) is located at residues 41 to 116 (PRICGVCGDR…IGMMKEFILT (76 aa)). Zn(2+) is bound by residues Cys44, Cys47, Cys61, Cys64, Cys80, Cys86, Cys96, and Cys99. 2 consecutive NR C4-type zinc fingers follow at residues 44–64 (CGVC…CEGC) and 80–104 (CPFS…LKRC). Residues 117 to 146 (DEEVQRKREMILKRKEEEALKESLKPKLSE) form a hinge region. The NR LBD domain maps to 147 to 444 (EQQKVINILL…LTPLVLEVFG (298 aa)). Calcitriol is bound at residue Ser258. Residues 267–285 (KMIPGFRDLTAEDQIALLK) form an interaction with coactivator LXXLL motif region. Calcitriol is bound by residues Arg295, Ser299, His326, and His418. The short motif at 437-445 (PLVLEVFGN) is the 9aaTAD element.

This sequence belongs to the nuclear hormone receptor family. NR1 subfamily. As to quaternary structure, homodimer in the absence of bound vitamin D3. Heterodimer with RXRA after vitamin D3 binding.

The protein resides in the nucleus. Its subcellular location is the cytoplasm. Functionally, nuclear receptor for calcitriol, the active form of vitamin D3 which mediates the action of this vitamin on cells. Enters the nucleus upon vitamin D3 binding where it forms heterodimers with the retinoid X receptor/RXR. The VDR-RXR heterodimers bind to specific response elements on DNA and activate the transcription of vitamin D3-responsive target genes. Plays a central role in calcium homeostasis. Also functions as a receptor for the secondary bile acid lithocholic acid (LCA) and its metabolites. The chain is Vitamin D3 receptor (VDR) from Coturnix japonica (Japanese quail).